The following is a 581-amino-acid chain: Arginine--tRNA ligase (581 aa).

The 'HIGH' region motif lies at 126–136 (PNLAKEMHVGH).

Belongs to the class-I aminoacyl-tRNA synthetase family. In terms of assembly, monomer.

It localises to the cytoplasm. It catalyses the reaction tRNA(Arg) + L-arginine + ATP = L-arginyl-tRNA(Arg) + AMP + diphosphate. The sequence is that of Arginine--tRNA ligase from Shewanella denitrificans (strain OS217 / ATCC BAA-1090 / DSM 15013).